The chain runs to 430 residues: Serine--tRNA ligase (430 aa).

An L-serine-binding site is contributed by 237 to 239; sequence TAE. 268-270 provides a ligand contact to ATP; the sequence is RSE. Residue glutamate 291 participates in L-serine binding. Residue 355-358 participates in ATP binding; sequence EISS. Serine 391 contributes to the L-serine binding site.

This sequence belongs to the class-II aminoacyl-tRNA synthetase family. Type-1 seryl-tRNA synthetase subfamily. In terms of assembly, homodimer. The tRNA molecule binds across the dimer.

The protein resides in the cytoplasm. It catalyses the reaction tRNA(Ser) + L-serine + ATP = L-seryl-tRNA(Ser) + AMP + diphosphate + H(+). It carries out the reaction tRNA(Sec) + L-serine + ATP = L-seryl-tRNA(Sec) + AMP + diphosphate + H(+). Its pathway is aminoacyl-tRNA biosynthesis; selenocysteinyl-tRNA(Sec) biosynthesis; L-seryl-tRNA(Sec) from L-serine and tRNA(Sec): step 1/1. Its function is as follows. Catalyzes the attachment of serine to tRNA(Ser). Is also able to aminoacylate tRNA(Sec) with serine, to form the misacylated tRNA L-seryl-tRNA(Sec), which will be further converted into selenocysteinyl-tRNA(Sec). This chain is Serine--tRNA ligase, found in Escherichia fergusonii (strain ATCC 35469 / DSM 13698 / CCUG 18766 / IAM 14443 / JCM 21226 / LMG 7866 / NBRC 102419 / NCTC 12128 / CDC 0568-73).